The primary structure comprises 447 residues: Argininosuccinate synthase (447 aa).

Residues 17–25 (AFSGGLDTS) and Ala-43 contribute to the ATP site. Residue Tyr-99 participates in L-citrulline binding. Residues Gly-129 and Thr-131 each coordinate ATP. The L-aspartate site is built by Thr-131, Asn-135, and Asp-136. Residue Asn-135 participates in L-citrulline binding. Asp-136 provides a ligand contact to ATP. L-citrulline contacts are provided by Arg-139 and Ser-192. Asp-194 is a binding site for ATP. Residues Thr-201, Glu-203, and Glu-280 each coordinate L-citrulline.

This sequence belongs to the argininosuccinate synthase family. Type 2 subfamily. As to quaternary structure, homotetramer.

It is found in the cytoplasm. The catalysed reaction is L-citrulline + L-aspartate + ATP = 2-(N(omega)-L-arginino)succinate + AMP + diphosphate + H(+). Its pathway is amino-acid biosynthesis; L-arginine biosynthesis; L-arginine from L-ornithine and carbamoyl phosphate: step 2/3. The chain is Argininosuccinate synthase from Paracidovorax citrulli (strain AAC00-1) (Acidovorax citrulli).